Consider the following 586-residue polypeptide: Ezrin (586 aa).

The FERM domain occupies 2-295 (PKPINVRVTT…GNHELYMRRR (294 aa)). Lys-60 carries the N6-acetyllysine modification. Positions 115–120 (IYCPPE) match the [IL]-x-C-x-x-[DE] motif motif. Tyr-146 bears the Phosphotyrosine; by PDGFR mark. The interaction with SCYL3 stretch occupies residues 244 to 586 (EIRNISFNDK…KQRIDEFEAM (343 aa)). Residues 302 to 462 (VQQMKAQARE…QDDLVKTKEE (161 aa)) adopt a coiled-coil conformation. Residues 306–338 (KAQAREEKHQKQLERQQLETEKKRRETVEREKE) are disordered. The span at 308–338 (QAREEKHQKQLERQQLETEKKRRETVEREKE) shows a compositional bias: basic and acidic residues. Phosphoserine is present on Ser-366. Tyr-478 carries the post-translational modification Phosphotyrosine. Ser-535 bears the Phosphoserine mark. At Thr-567 the chain carries Phosphothreonine; by ROCK2 and PKC/PRKCI.

Interacts with PODXL and NHERF2. Found in a complex with EZR, PODXL and NHERF2. Interacts with PALS1. Interacts with MCC, PLEKHG6, SCYL3/PACE1, NHERF1 and TMEM8B. Interacts (when phosphorylated) with FES/FPS. Interacts with dimeric S100P, the interaction may be activating through unmasking of F-actin binding sites. Identified in complexes that contain VIM, EZR, AHNAK, BFSP1, BFSP2, ANK2, PLEC, PRX and spectrin. Detected in a complex composed of at least EZR, AHNAK, PPL and PRX. Interacts with PDPN (via cytoplasmic domain); activates RHOA and promotes epithelial-mesenchymal transition. Interacts with SPN/CD43 cytoplasmic tail, CD44 and ICAM2. Interacts with SLC9A3; interaction targets SLC9A3 to the apical membrane. Interacts with SLC9A1; regulates interactions of SLC9A1 with cytoskeletal and promotes stress fiber formation. Interacts with CLIC5; may work together in a complex which also includes RDX and MYO6 to stabilize linkages between the plasma membrane and subjacent actin cytoskeleton at the base of stereocilia. Phosphorylated by tyrosine-protein kinases. Phosphorylation by ROCK2 suppresses the head-to-tail association of the N-terminal and C-terminal halves resulting in an opened conformation which is capable of actin and membrane-binding. Post-translationally, S-nitrosylation is induced by interferon-gamma and oxidatively-modified low-densitity lipoprotein (LDL(ox)) possibly implicating the iNOS-S100A8/9 transnitrosylase complex. As to expression, glomerular epithelium cell (podocyte). Expressed in cerebrum, cerebellum and hippocampus (at protein level). Expressed in the small intestine, lung, kidney and ovaries.

The protein resides in the apical cell membrane. It localises to the cell projection. Its subcellular location is the microvillus membrane. The protein localises to the ruffle membrane. It is found in the cytoplasm. The protein resides in the cell cortex. It localises to the cytoskeleton. Its subcellular location is the microvillus. With respect to regulation, a head-to-tail association, of the N-terminal and C-terminal halves results in a closed conformation (inactive form) which is incapable of actin or membrane-binding. In terms of biological role, probably involved in connections of major cytoskeletal structures to the plasma membrane. In epithelial cells, required for the formation of microvilli and membrane ruffles on the apical pole. Along with PLEKHG6, required for normal macropinocytosis. This chain is Ezrin (Ezr), found in Rattus norvegicus (Rat).